The chain runs to 315 residues: Gamma-hemolysin component C (315 aa).

The N-terminal stretch at 1–29 is a signal peptide; it reads MLKNKILTTTLSVSLLAPLANPLLENAKA.

This sequence belongs to the aerolysin family. In terms of assembly, toxicity requires sequential binding and synergistic association of a class S and a class F component which form heterooligomeric complexes. HlgB (class F) associates with either hlgA thus forming an AB toxin or with hlgC thus forming a CB toxin.

Its subcellular location is the secreted. Its function is as follows. Toxin that seems to act by forming pores in the membrane of the cell. Has a hemolytic and a leucotoxic activity. The sequence is that of Gamma-hemolysin component C (hlgC) from Staphylococcus aureus (strain NCTC 8325 / PS 47).